A 369-amino-acid chain; its full sequence is Maltose/maltodextrin import ATP-binding protein MalK (369 aa).

One can recognise an ABC transporter domain in the interval Val4 to Ile234. Gly36–Ser43 is a binding site for ATP.

It belongs to the ABC transporter superfamily. Maltooligosaccharide importer (TC 3.A.1.1.1) family. The complex is composed of two ATP-binding proteins (MalK), two transmembrane proteins (MalG and MalK) and a solute-binding protein (MalE).

The protein resides in the cell inner membrane. It carries out the reaction D-maltose(out) + ATP + H2O = D-maltose(in) + ADP + phosphate + H(+). Functionally, part of the ABC transporter complex MalEFGK involved in maltose/maltodextrin import. Responsible for energy coupling to the transport system. The sequence is that of Maltose/maltodextrin import ATP-binding protein MalK from Salmonella typhi.